A 279-amino-acid chain; its full sequence is Lyso-glycine lipid O-acyltransferase (279 aa).

It belongs to the O-acyltransferase GlsA family.

The catalysed reaction is a lyso-glycine lipid + a fatty acyl-[ACP] = a glycine lipid + holo-[ACP]. It catalyses the reaction N-[(3R)-3-hydroxyhexadecanoyl]-glycine + hexadecanoyl-[ACP] = N-[(3R)-3-(hexadecanoyloxy)hexadecanoyl]-glycine + holo-[ACP]. Its pathway is lipid metabolism. Is involved in the production of glycine lipids (GL), which are phosphorus-free membrane lipids. Catalyzes the second step of GL biosynthesis, i.e. the O-acylation of the hydroxyl group of lyso-glycine lipids, resulting in the production of the mature diacylated glycine lipids. This Phocaeicola vulgatus (strain ATCC 8482 / DSM 1447 / JCM 5826 / CCUG 4940 / NBRC 14291 / NCTC 11154) (Bacteroides vulgatus) protein is Lyso-glycine lipid O-acyltransferase.